We begin with the raw amino-acid sequence, 131 residues long: uncharacterized protein (131 aa).

The first 16 residues, 1–16 (MDVLFVAIFAVPLILG), serve as a signal peptide directing secretion.

It is found in the secreted. This is an uncharacterized protein from Homo sapiens (Human).